Here is a 475-residue protein sequence, read N- to C-terminus: Ribulose bisphosphate carboxylase large chain (475 aa).

2 residues coordinate substrate: Asn123 and Thr173. Lys175 functions as the Proton acceptor in the catalytic mechanism. Lys177 lines the substrate pocket. Residues Lys201, Asp203, and Glu204 each coordinate Mg(2+). The residue at position 201 (Lys201) is an N6-carboxylysine. His294 functions as the Proton acceptor in the catalytic mechanism. Arg295, His327, and Ser379 together coordinate substrate.

This sequence belongs to the RuBisCO large chain family. Type I subfamily. In terms of assembly, heterohexadecamer of 8 large chains and 8 small chains. Requires Mg(2+) as cofactor.

The protein resides in the plastid. It localises to the cyanelle. The catalysed reaction is 2 (2R)-3-phosphoglycerate + 2 H(+) = D-ribulose 1,5-bisphosphate + CO2 + H2O. It catalyses the reaction D-ribulose 1,5-bisphosphate + O2 = 2-phosphoglycolate + (2R)-3-phosphoglycerate + 2 H(+). Its function is as follows. RuBisCO catalyzes two reactions: the carboxylation of D-ribulose 1,5-bisphosphate, the primary event in carbon dioxide fixation, as well as the oxidative fragmentation of the pentose substrate in the photorespiration process. Both reactions occur simultaneously and in competition at the same active site. The protein is Ribulose bisphosphate carboxylase large chain of Cyanophora paradoxa.